We begin with the raw amino-acid sequence, 1188 residues long: DNA-directed RNA polymerase subunit beta (1188 aa).

The segment at 1149 to 1188 (ELRDLDEGEDDDVMHVDDLEKAREKQAQETPEVSENSEEK) is disordered. A compositionally biased stretch (basic and acidic residues) spans 1161-1175 (VMHVDDLEKAREKQA).

Belongs to the RNA polymerase beta chain family. As to quaternary structure, the RNAP catalytic core consists of 2 alpha, 1 beta, 1 beta' and 1 omega subunit. When a sigma factor is associated with the core the holoenzyme is formed, which can initiate transcription.

It catalyses the reaction RNA(n) + a ribonucleoside 5'-triphosphate = RNA(n+1) + diphosphate. In terms of biological role, DNA-dependent RNA polymerase catalyzes the transcription of DNA into RNA using the four ribonucleoside triphosphates as substrates. This Streptococcus uberis (strain ATCC BAA-854 / 0140J) protein is DNA-directed RNA polymerase subunit beta.